We begin with the raw amino-acid sequence, 494 residues long: Inositol-trisphosphate 3-kinase homolog (494 aa).

ATP is bound by residues serine 206, lysine 218, 260-262, and aspartate 276; that span reads EDL. Substrate is bound by residues lysine 278 and 322-329; that span reads KLRYMQFR. 2 residues coordinate ATP: lysine 346 and aspartate 426. Lysine 429 serves as a coordination point for substrate.

The protein belongs to the inositol phosphokinase (IPK) family. In terms of tissue distribution, expressed in spermatheca.

It carries out the reaction 1D-myo-inositol 1,4,5-trisphosphate + ATP = 1D-myo-inositol 1,3,4,5-tetrakisphosphate + ADP + H(+). With respect to regulation, unlike mammalian IP3K, may not be regulated by calmodulin. In terms of biological role, probably by regulating inositol 1,4,5-trisphosphate levels, negatively regulates posterior body wall muscle contractions required for defecation and let-23 signaling pathway that controls spermathecal dilation and ovulation. May also regulate ovulation downstream of actin cross-linker fln-1. The sequence is that of Inositol-trisphosphate 3-kinase homolog from Caenorhabditis elegans.